We begin with the raw amino-acid sequence, 291 residues long: tRNA U34 carboxymethyltransferase (291 aa).

Residues K61, W75, K80, G100, 122–124 (DPS), 149–150 (VE), Y169, and R284 each bind carboxy-S-adenosyl-L-methionine.

Belongs to the class I-like SAM-binding methyltransferase superfamily. CmoB family. In terms of assembly, homotetramer.

The catalysed reaction is carboxy-S-adenosyl-L-methionine + 5-hydroxyuridine(34) in tRNA = 5-carboxymethoxyuridine(34) in tRNA + S-adenosyl-L-homocysteine + H(+). Its function is as follows. Catalyzes carboxymethyl transfer from carboxy-S-adenosyl-L-methionine (Cx-SAM) to 5-hydroxyuridine (ho5U) to form 5-carboxymethoxyuridine (cmo5U) at position 34 in tRNAs. This chain is tRNA U34 carboxymethyltransferase, found in Campylobacter jejuni subsp. jejuni serotype O:6 (strain 81116 / NCTC 11828).